We begin with the raw amino-acid sequence, 140 residues long: General stress protein 26 (140 aa).

The sequence is that of General stress protein 26 (ydaG) from Bacillus subtilis (strain 168).